The following is a 248-amino-acid chain: MKYLKRILLMVGFLTRIPVPFKIDGTEEDYGKGLVFAPVVGLLIGGILTILFYILKRFFPPGVTGILLIAAYIMLTGGLHLDGLGDTFDGIFSNRSREKMLEIMRDSRIGTNAVLAVICVVILNYALLSSIPLSGLPKALLLFPVAGRIGSLVGAGSTVYAREGEGLGKSFINCCGIKEILQGGIIYFIVSLLVLNIKGLLLAAATMITSFATVKFFAGKVGGATGDILGAVCELNQTFFLILFYLFK.

Transmembrane regions (helical) follow at residues 34 to 54 (LVFA…LFYI), 58 to 78 (FFPP…LTGG), 113 to 133 (AVLA…SIPL), 139 to 159 (ALLL…GSTV), 185 to 205 (IIYF…LAAA), and 227 to 247 (DILG…FYLF).

This sequence belongs to the CobS family. It depends on Mg(2+) as a cofactor.

The protein resides in the cell membrane. The catalysed reaction is alpha-ribazole + adenosylcob(III)inamide-GDP = adenosylcob(III)alamin + GMP + H(+). It catalyses the reaction alpha-ribazole 5'-phosphate + adenosylcob(III)inamide-GDP = adenosylcob(III)alamin 5'-phosphate + GMP + H(+). It functions in the pathway cofactor biosynthesis; adenosylcobalamin biosynthesis; adenosylcobalamin from cob(II)yrinate a,c-diamide: step 7/7. Joins adenosylcobinamide-GDP and alpha-ribazole to generate adenosylcobalamin (Ado-cobalamin). Also synthesizes adenosylcobalamin 5'-phosphate from adenosylcobinamide-GDP and alpha-ribazole 5'-phosphate. This is Adenosylcobinamide-GDP ribazoletransferase from Acetivibrio thermocellus (strain ATCC 27405 / DSM 1237 / JCM 9322 / NBRC 103400 / NCIMB 10682 / NRRL B-4536 / VPI 7372) (Clostridium thermocellum).